The primary structure comprises 852 residues: Elongation factor 2 (852 aa).

The 340-residue stretch at 17-356 (RNIRNMSVIA…MIAFHLPSPV (340 aa)) folds into the tr-type G domain. Residue 26–33 (AHVDHGKS) coordinates GTP. A phosphothreonine mark is found at Thr57 and Thr59. Residues 170–173 (NKMD) and 227–229 (SGL) contribute to the GTP site. Diphthamide is present on His709.

Belongs to the TRAFAC class translation factor GTPase superfamily. Classic translation factor GTPase family. EF-G/EF-2 subfamily. In terms of processing, phosphorylation by EF-2 kinase completely inactivates EF-2. Post-translationally, AMPylated by fic-1.

Its subcellular location is the cytoplasm. It carries out the reaction GTP + H2O = GDP + phosphate + H(+). In terms of biological role, catalyzes the GTP-dependent ribosomal translocation step during translation elongation. During this step, the ribosome changes from the pre-translocational (PRE) to the post-translocational (POST) state as the newly formed A-site-bound peptidyl-tRNA and P-site-bound deacylated tRNA move to the P and E sites, respectively. Catalyzes the coordinated movement of the two tRNA molecules, the mRNA and conformational changes in the ribosome. Involved in the morphogenesis of epidermal tissues. This chain is Elongation factor 2 (eef-2), found in Caenorhabditis elegans.